The following is a 275-amino-acid chain: 2,3,4,5-tetrahydropyridine-2,6-dicarboxylate N-succinyltransferase (275 aa).

The substrate site is built by arginine 106 and aspartate 143.

It belongs to the transferase hexapeptide repeat family. Homotrimer.

Its subcellular location is the cytoplasm. It catalyses the reaction (S)-2,3,4,5-tetrahydrodipicolinate + succinyl-CoA + H2O = (S)-2-succinylamino-6-oxoheptanedioate + CoA. It functions in the pathway amino-acid biosynthesis; L-lysine biosynthesis via DAP pathway; LL-2,6-diaminopimelate from (S)-tetrahydrodipicolinate (succinylase route): step 1/3. In Burkholderia mallei (strain NCTC 10247), this protein is 2,3,4,5-tetrahydropyridine-2,6-dicarboxylate N-succinyltransferase.